The sequence spans 92 residues: Small ribosomal subunit protein uS19c (92 aa).

This sequence belongs to the universal ribosomal protein uS19 family.

It is found in the plastid. It localises to the chloroplast. Functionally, protein S19 forms a complex with S13 that binds strongly to the 16S ribosomal RNA. The protein is Small ribosomal subunit protein uS19c (rps19) of Anthoceros angustus (Hornwort).